The sequence spans 175 residues: Nicotinamide-nucleotide adenylyltransferase 1 (175 aa).

It belongs to the archaeal NMN adenylyltransferase family.

The protein localises to the cytoplasm. It carries out the reaction beta-nicotinamide D-ribonucleotide + ATP + H(+) = diphosphate + NAD(+). Its pathway is cofactor biosynthesis; NAD(+) biosynthesis; NAD(+) from nicotinamide D-ribonucleotide: step 1/1. This chain is Nicotinamide-nucleotide adenylyltransferase 1, found in Sulfolobus acidocaldarius (strain ATCC 33909 / DSM 639 / JCM 8929 / NBRC 15157 / NCIMB 11770).